We begin with the raw amino-acid sequence, 224 residues long: MAERTVKPQRRALVNRTTNETKIQISLSLDGGYVTVPESIFKDKKYDDATQVTSSQVISINTGVGFLDHMIHALAKHGGWSLIVECIGDLHIDDHHTTEDVGIALGDAVKEALAYRGVKRFGSGFAPLDEALSRAVVDLSNRPFAVVELGLKREKIGDLSCEMIPHFLESFAQAAHITMHVDCLRGFNDHHRAESAFKALAVAIKESISSNGTNDVPSTKGVLF.

Belongs to the imidazoleglycerol-phosphate dehydratase family.

It carries out the reaction D-erythro-1-(imidazol-4-yl)glycerol 3-phosphate = 3-(imidazol-4-yl)-2-oxopropyl phosphate + H2O. Its pathway is amino-acid biosynthesis; L-histidine biosynthesis; L-histidine from 5-phospho-alpha-D-ribose 1-diphosphate: step 6/9. The protein is Imidazoleglycerol-phosphate dehydratase (HIS3) of Cyberlindnera jadinii (Torula yeast).